We begin with the raw amino-acid sequence, 178 residues long: MQKIVILRLGHRPERDKRITTHVGLTARALGAEGMLLASNDKGIKNAIEDVAERWGGDFYVENDVNWKSEIEKWKEEGGKVCHLSMYGINLPDAAGEIKLCDKLMIVVGAEKVPTEIYDLADWNVAIGNQPHSEVAAVALTMDRIAQEEPLKREFGYAELTIVPMERGKRVINNVKEE.

Residues leucine 84, 109–113, and 127–134 each bind S-adenosyl-L-methionine; these read GAEKV and IGNQPHSE.

Belongs to the aTrm56 family. In terms of assembly, homodimer.

It is found in the cytoplasm. It carries out the reaction cytidine(56) in tRNA + S-adenosyl-L-methionine = 2'-O-methylcytidine(56) in tRNA + S-adenosyl-L-homocysteine + H(+). Functionally, specifically catalyzes the AdoMet-dependent 2'-O-ribose methylation of cytidine at position 56 in tRNAs. This chain is tRNA (cytidine(56)-2'-O)-methyltransferase, found in Methanococcoides burtonii (strain DSM 6242 / NBRC 107633 / OCM 468 / ACE-M).